Here is a 596-residue protein sequence, read N- to C-terminus: Phosphomethylpyrimidine synthase 1 (596 aa).

Substrate contacts are provided by residues asparagine 228, methionine 257, tyrosine 286, histidine 322, 342–344 (SRG), 383–386 (DGLR), and glutamate 422. Histidine 426 provides a ligand contact to Zn(2+). Substrate is bound at residue tyrosine 449. Position 490 (histidine 490) interacts with Zn(2+). [4Fe-4S] cluster-binding residues include cysteine 570, cysteine 573, and cysteine 578.

This sequence belongs to the ThiC family. In terms of assembly, homodimer. The cofactor is [4Fe-4S] cluster.

The enzyme catalyses 5-amino-1-(5-phospho-beta-D-ribosyl)imidazole + S-adenosyl-L-methionine = 4-amino-2-methyl-5-(phosphooxymethyl)pyrimidine + CO + 5'-deoxyadenosine + formate + L-methionine + 3 H(+). It participates in cofactor biosynthesis; thiamine diphosphate biosynthesis. Functionally, catalyzes the synthesis of the hydroxymethylpyrimidine phosphate (HMP-P) moiety of thiamine from aminoimidazole ribotide (AIR) in a radical S-adenosyl-L-methionine (SAM)-dependent reaction. This chain is Phosphomethylpyrimidine synthase 1, found in Syntrophotalea carbinolica (strain DSM 2380 / NBRC 103641 / GraBd1) (Pelobacter carbinolicus).